The following is a 220-amino-acid chain: MKPAKSSPVQIARRGLMLVISSPSGAGKSTIARTLLETDRQIGLSVSVTTRQRRPSEVEDVHYHFKSVREFERLRDSDALLEWAEVHGNFYGTPREPVEQAMGEGRDMLFDIDWQGAQQLQEKMSADVVSIFVLPPTMTELQSRLHRRAEDSEEVIQTRLANSRAEIAHWREYDYVIVNDDLNAALDAVQSIVKAERLRRDRRHGMFDFVRELLEETPSL.

The Guanylate kinase-like domain maps to 15–194; sequence GLMLVISSPS…ALDAVQSIVK (180 aa). Residue 22–29 participates in ATP binding; sequence SPSGAGKS.

This sequence belongs to the guanylate kinase family.

Its subcellular location is the cytoplasm. It catalyses the reaction GMP + ATP = GDP + ADP. In terms of biological role, essential for recycling GMP and indirectly, cGMP. This chain is Guanylate kinase, found in Rhizobium johnstonii (strain DSM 114642 / LMG 32736 / 3841) (Rhizobium leguminosarum bv. viciae).